The primary structure comprises 560 residues: Secreted RxLR effector protein 142 (560 aa).

A signal peptide spans 1–22 (MRRAYFVAIALLVAAGGKTAAG). Disordered stretches follow at residues 48–73 (QSQN…ERTP) and 354–377 (INRP…LNNQ). Positions 54 to 72 (ESRDPKDDLKLSAGNEERT) are enriched in basic and acidic residues. The short motif at 56–71 (RDPKDDLKLSAGNEER) is the RxLR-dEER element. The segment covering 361 to 377 (GPSTNGATTSNGGLNNQ) has biased composition (polar residues).

The protein belongs to the RxLR effector family.

The protein resides in the secreted. Its subcellular location is the host nucleus. Functionally, secreted effector that completely suppresses the host cell death induced by cell death-inducing proteins. The protein is Secreted RxLR effector protein 142 of Plasmopara viticola (Downy mildew of grapevine).